The primary structure comprises 244 residues: Glutathione S-transferase theta-2 (244 aa).

The region spanning 2–82 (GLELYLDLLS…YLSSKYQVAD (81 aa)) is the GST N-terminal domain. Glutathione-binding positions include 40 to 41 (HM), 53 to 54 (KV), 66 to 67 (ES), and 104 to 107 (DNIR). The GST C-terminal domain maps to 88 to 230 (DLQARAQVHE…AKKMLPVPPP (143 aa)).

It belongs to the GST superfamily. Theta family. In terms of assembly, homodimer. As to expression, in liver, highest expression found in central vein limiting plate hepatocytes. Also expressed in interlobular bile duct epithelial cells. In lung, expressed in club cells and ciliated cells of the bronchiolar epithelium and in type II alveolar cells of the lung parenchyma.

It localises to the cytoplasm. Its subcellular location is the cytosol. It is found in the nucleus. It catalyses the reaction RX + glutathione = an S-substituted glutathione + a halide anion + H(+). Functionally, conjugation of reduced glutathione to a wide number of exogenous and endogenous hydrophobic electrophiles. This is Glutathione S-transferase theta-2 from Mus musculus (Mouse).